Consider the following 230-residue polypeptide: Ribonuclease 3 (230 aa).

The region spanning 5–125 (YSRFYNILGY…VIGAIYLDSD (121 aa)) is the RNase III domain. Residue glutamate 40 participates in Mg(2+) binding. Residue aspartate 44 is part of the active site. The Mg(2+) site is built by aspartate 111 and glutamate 114. Glutamate 114 is an active-site residue. Residues 153–223 (DSKSKLQEIL…AEKMIEMLSQ (71 aa)) form the DRBM domain.

The protein belongs to the ribonuclease III family. As to quaternary structure, homodimer. Mg(2+) serves as cofactor.

It localises to the cytoplasm. The catalysed reaction is Endonucleolytic cleavage to 5'-phosphomonoester.. In terms of biological role, digests double-stranded RNA. Involved in the processing of primary rRNA transcript to yield the immediate precursors to the large and small rRNAs (23S and 16S). Processes some mRNAs, and tRNAs when they are encoded in the rRNA operon. Processes pre-crRNA and tracrRNA of type II CRISPR loci if present in the organism. This Francisella tularensis subsp. holarctica (strain LVS) protein is Ribonuclease 3.